The chain runs to 951 residues: Metal transporter CNNM1 (951 aa).

The helical transmembrane segment at 23 to 43 (AVLLLFFSLSPRPPAAAAWLL) threads the bilayer. The interval 116 to 135 (GGVAPSAVPTRPPGPQRCRE) is disordered. One can recognise a CNNM transmembrane domain in the interval 218–414 (LLPPAWLRAL…DPYSDLVKEE (197 aa)). The next 3 membrane-spanning stretches (helical) occupy residues 222 to 242 (AWLR…FSGL), 282 to 302 (LLCT…GWLY), and 321 to 341 (IHFP…GAEI). CBS domains lie at 433 to 495 (LTPL…CTPL) and 502 to 568 (YNRP…ILDE). Composition is skewed to polar residues over residues 731-740 (SRCSGLNRSE) and 814-824 (KAPTTRGTPQT). 2 disordered regions span residues 731–753 (SRCS…GGSN) and 795–830 (MDSS…DDPA). Thr-821 and Thr-824 each carry phosphothreonine. Ser-850 is modified (phosphoserine). Positions 920–951 (KLLRTLSGQKRKRSPEGERTSEDNSNLTPLIT) are disordered. The segment covering 942–951 (DNSNLTPLIT) has biased composition (polar residues).

This sequence belongs to the ACDP family. In terms of tissue distribution, restricted to brain and testis.

It localises to the cell membrane. Functionally, probable metal transporter. The polypeptide is Metal transporter CNNM1 (CNNM1) (Homo sapiens (Human)).